A 550-amino-acid polypeptide reads, in one-letter code: Mycosin-2 (550 aa).

The first 33 residues, 1-33 (MASPLNRPGLRAAAASAALTLVALSANVPAAQA), serve as a signal peptide directing secretion. The tract at residues 34-62 (IPPPSVDPAMVPADARPGPDQPMRRSNSC) is disordered. The Peptidase S8 domain occupies 79 to 490 (GFNLVNISKA…YGLVDPVAAL (412 aa)). Active-site charge relay system residues include Asp-103 and His-133. Residues 168-190 (PPVTAAPAPPVEVPPPMPPPPPV) show a composition bias toward pro residues. Residues 168–236 (PPVTAAPAPP…PPPPPGAPDG (69 aa)) are disordered. Ser-435 functions as the Charge relay system in the catalytic mechanism. Residues 524 to 544 (NIAIGFVGAVATGVLAMAIGA) traverse the membrane as a helical segment.

The protein belongs to the peptidase S8 family.

It localises to the cell membrane. This Mycobacterium tuberculosis (strain ATCC 25618 / H37Rv) protein is Mycosin-2.